Here is a 531-residue protein sequence, read N- to C-terminus: Apolipoprotein N-acyltransferase (531 aa).

7 helical membrane-spanning segments follow: residues 8–28, 34–54, 74–94, 105–125, 128–148, 178–198, and 206–226; these read IILL…LLAM, FGIF…IDGV, WSFG…AFLV, LAVV…VLVA, LWSD…VAEW, VLNV…PALI, and VGLA…YYRL. The region spanning 243–493 is the CN hydrolase domain; that stretch reads VQPVIDQAKK…KGVTDAILPG (251 aa). Residue E287 is the Proton acceptor of the active site. The active site involves K351. Catalysis depends on C405, which acts as the Nucleophile. The helical transmembrane segment at 501–521 threads the bilayer; it reads SMLRGRIFWFTGVFLLLVAAI.

This sequence belongs to the CN hydrolase family. Apolipoprotein N-acyltransferase subfamily.

The protein localises to the cell inner membrane. The catalysed reaction is N-terminal S-1,2-diacyl-sn-glyceryl-L-cysteinyl-[lipoprotein] + a glycerophospholipid = N-acyl-S-1,2-diacyl-sn-glyceryl-L-cysteinyl-[lipoprotein] + a 2-acyl-sn-glycero-3-phospholipid + H(+). It functions in the pathway protein modification; lipoprotein biosynthesis (N-acyl transfer). Its function is as follows. Catalyzes the phospholipid dependent N-acylation of the N-terminal cysteine of apolipoprotein, the last step in lipoprotein maturation. The protein is Apolipoprotein N-acyltransferase of Sinorhizobium fredii (strain NBRC 101917 / NGR234).